A 77-amino-acid polypeptide reads, in one-letter code: Acyl carrier protein (77 aa).

Residues 2 to 77 form the Carrier domain; it reads SNIEERVKKI…AAIDYVSKNQ (76 aa). Position 37 is an O-(pantetheine 4'-phosphoryl)serine (serine 37).

Belongs to the acyl carrier protein (ACP) family. In terms of processing, 4'-phosphopantetheine is transferred from CoA to a specific serine of apo-ACP by AcpS. This modification is essential for activity because fatty acids are bound in thioester linkage to the sulfhydryl of the prosthetic group.

The protein localises to the cytoplasm. Its pathway is lipid metabolism; fatty acid biosynthesis. Its function is as follows. Carrier of the growing fatty acid chain in fatty acid biosynthesis. The protein is Acyl carrier protein of Shewanella oneidensis (strain ATCC 700550 / JCM 31522 / CIP 106686 / LMG 19005 / NCIMB 14063 / MR-1).